A 375-amino-acid polypeptide reads, in one-letter code: Response regulator aspartate phosphatase E (375 aa).

Residues 24–95 adopt a coiled-coil conformation; it reads NVTDAEMLKA…HKKKLDNMRA (72 aa). TPR repeat units lie at residues 96–129, 177–210, 219–252, 258–291, 297–330, and 333–366; these read YYYNFFRGMYEFRNGEYTRAITYYKKAERKIPTI, IQCHFVIAGNYDDLENHEKALPHLQEALKGAELL, ATAFFNLGNCYHKMDNLNKAARYIEQALVQYRKI, PQAYHDLALIYFKQGKKEQAMDCFRKGIRSAVDF, MNLFEALDVLYIRNGDTPKLLNIFSRLENGKGYP, and EELALLGGNLFDYNGKIEDSIICFKKMVYAQKQI.

Belongs to the Rap family.

Its subcellular location is the cytoplasm. Its activity is regulated as follows. Phosphatase activity is inhibited by the phosphatase regulator PhrE. Functionally, involved in the regulation of sporulation. Acts as a phosphatase that specifically dephosphorylates the sporulation initiation phosphotransferase Spo0F and inhibits its activity. Probably plays a dispensable role in the overall context of sporulation initiation. The protein is Response regulator aspartate phosphatase E (rapE) of Bacillus subtilis (strain 168).